The chain runs to 122 residues: Glycine cleavage system H protein (122 aa).

Residues 19-101 (VATVGITDYA…QGKAWFFKIK (83 aa)) form the Lipoyl-binding domain. Lys60 bears the N6-lipoyllysine mark.

It belongs to the GcvH family. In terms of assembly, the glycine cleavage system is composed of four proteins: P, T, L and H. It depends on (R)-lipoate as a cofactor.

In terms of biological role, the glycine cleavage system catalyzes the degradation of glycine. The H protein shuttles the methylamine group of glycine from the P protein to the T protein. This Bradyrhizobium diazoefficiens (strain JCM 10833 / BCRC 13528 / IAM 13628 / NBRC 14792 / USDA 110) protein is Glycine cleavage system H protein.